The primary structure comprises 72 residues: Translation initiation factor IF-1 2 (72 aa).

The S1-like domain occupies 1–72 (MAKDDVIQMQ…SRARIVFRTK (72 aa)).

The protein belongs to the IF-1 family. Component of the 30S ribosomal translation pre-initiation complex which assembles on the 30S ribosome in the order IF-2 and IF-3, IF-1 and N-formylmethionyl-tRNA(fMet); mRNA recruitment can occur at any time during PIC assembly.

It localises to the cytoplasm. In terms of biological role, one of the essential components for the initiation of protein synthesis. Stabilizes the binding of IF-2 and IF-3 on the 30S subunit to which N-formylmethionyl-tRNA(fMet) subsequently binds. Helps modulate mRNA selection, yielding the 30S pre-initiation complex (PIC). Upon addition of the 50S ribosomal subunit IF-1, IF-2 and IF-3 are released leaving the mature 70S translation initiation complex. The polypeptide is Translation initiation factor IF-1 2 (Cupriavidus metallidurans (strain ATCC 43123 / DSM 2839 / NBRC 102507 / CH34) (Ralstonia metallidurans)).